The following is a 923-amino-acid chain: Ubiquitin carboxyl-terminal hydrolase 10 (923 aa).

The DUSP domain maps to 19-134 (FTPEEEKRIV…GGPPIERKLI (116 aa)). The tract at residues 65 to 91 (NECSTGESSEAPRPGPIDNHDIIESDS) is disordered. Positions 304–895 (AGLSNLGNTC…AAYVLFYRRV (592 aa)) constitute a USP domain. C313 (nucleophile) is an active-site residue. The active-site Proton acceptor is the H853.

This sequence belongs to the peptidase C19 family.

The catalysed reaction is Thiol-dependent hydrolysis of ester, thioester, amide, peptide and isopeptide bonds formed by the C-terminal Gly of ubiquitin (a 76-residue protein attached to proteins as an intracellular targeting signal).. In terms of biological role, recognizes and hydrolyzes the peptide bond at the C-terminal Gly of ubiquitin. Involved in the processing of poly-ubiquitin precursors as well as that of ubiquitinated proteins. This is Ubiquitin carboxyl-terminal hydrolase 10 (UBP10) from Arabidopsis thaliana (Mouse-ear cress).